The chain runs to 113 residues: Small ribosomal subunit protein bS6 (113 aa).

The protein belongs to the bacterial ribosomal protein bS6 family.

Its function is as follows. Binds together with bS18 to 16S ribosomal RNA. This Pseudoalteromonas translucida (strain TAC 125) protein is Small ribosomal subunit protein bS6.